Reading from the N-terminus, the 348-residue chain is MDENKQKALAAALGQIEKQFGKGSIMRLGDNRTMDVETISTGSLSLDIALGAGGLPMGRIVEVYGPESSGKTTLTLELIAAAQRVGKTCAFIDAEHALDPIYAKKLGVNIDELLVSQPDTGEQALEICDALARSGAIDVIVIDSVAALTPKAEIEGEMGDSHMGLQARMLSQAMRKLTGNLKQSNCMCIFINQIRMKIGVMFGNPETTTGGNALKFYASVRLDIRRTGSIKEGDEAVGNETRIKVVKNKIAAPFKQADTQILYGQGFNREGELVDLGVKHKLVEKAGAWYSYNGDKIGQGKANACKFLRENPAAAMALDTKLREMLLNPAELIVEEPILSEMPQEEEL.

65 to 72 lines the ATP pocket; that stretch reads GPESSGKT.

The protein belongs to the RecA family.

Its subcellular location is the cytoplasm. In terms of biological role, can catalyze the hydrolysis of ATP in the presence of single-stranded DNA, the ATP-dependent uptake of single-stranded DNA by duplex DNA, and the ATP-dependent hybridization of homologous single-stranded DNAs. It interacts with LexA causing its activation and leading to its autocatalytic cleavage. The chain is Protein RecA from Vibrio anguillarum (Listonella anguillarum).